We begin with the raw amino-acid sequence, 71 residues long: Large ribosomal subunit protein eL38 (71 aa).

The protein belongs to the eukaryotic ribosomal protein eL38 family.

The polypeptide is Large ribosomal subunit protein eL38 (RpL38) (Argas monolakensis (Mono lake bird tick)).